The primary structure comprises 374 residues: Type II methyltransferase M.BbvI (374 aa).

The SAM-dependent MTase C5-type domain occupies 3–347; it reads FRKGELFCGP…EAVLKTFARI (345 aa). Residue cysteine 92 is part of the active site.

It belongs to the class I-like SAM-binding methyltransferase superfamily. C5-methyltransferase family.

It carries out the reaction a 2'-deoxycytidine in DNA + S-adenosyl-L-methionine = a 5-methyl-2'-deoxycytidine in DNA + S-adenosyl-L-homocysteine + H(+). Functionally, a methylase, recognizes the double-stranded sequence 5'-GCAGC-3', methylates C-2 on both strands, and protects the DNA from cleavage by the BbvI endonuclease. The chain is Type II methyltransferase M.BbvI (bbvIM) from Brevibacillus brevis (Bacillus brevis).